Here is a 530-residue protein sequence, read N- to C-terminus: Fusaric acid resistance protein FusA (530 aa).

The first 23 residues, 1-23 (MQSPATKGTLALAVLAVSLIMAG), serve as a signal peptide directing secretion. Cys24 is lipidated: N-palmitoyl cysteine. A lipid anchor (S-diacylglycerol cysteine) is attached at Cys24. 2 disordered regions span residues 375 to 442 (NAGV…RQRA) and 476 to 530 (GVET…PAAR). 2 stretches are compositionally biased toward low complexity: residues 421–430 (RPQLPAVARR) and 494–530 (AAGA…PAAR).

This sequence belongs to the outer membrane factor (OMF) (TC 1.B.17) family.

The protein localises to the cell membrane. Its function is as follows. Involved in the resistance (detoxification) of the fungal toxin fusaric acid. The protein is Fusaric acid resistance protein FusA (fusA) of Burkholderia cepacia (Pseudomonas cepacia).